Reading from the N-terminus, the 377-residue chain is MATAKTWKIAREIGDAVIKASRNPNRRWYGPHMAAAVRAISERIPLVDFVLEIRDARIPLSSEYELLRKFSPLPSKRIIVLNKMELADPLELKKCIDYFEERNYLSYAVNSHNKDCVKQLLNFLQSQVRELHKAGHSGHTTTMMLLGIPNVGKSALSNSLHHIGRISAAEKGKLKHTTVSSQPGDTKDIMSLKIGSHPNVYVLDTPGIFPPNLYDAEICAKLALTGAIPDDIVGELKLARLFLTILNSSHEYKKWAKLCKSQDLTESLSDESSKSDAKHKRQYATDHTQDFIVYDVRRVLYETISAFDGNLEDEISMGNLIETQFAALRSVLRVPEEASEFADLRVASKILNLYRTGRLGHYTLEHVSALAKSYTYL.

The N-terminal 21 residues, 1–21 (MATAKTWKIAREIGDAVIKAS), are a transit peptide targeting the mitochondrion. A CP-type G domain is found at 34 to 211 (AAAVRAISER…VLDTPGIFPP (178 aa)). A DARXP motif motif is present at residues 55 to 59 (DARIP). Residues 82 to 85 (NKME), 110 to 111 (NS), 150 to 155 (NVGKSA), and glycine 207 each bind GTP.

This sequence belongs to the TRAFAC class YlqF/YawG GTPase family. MTG1 subfamily.

The protein resides in the mitochondrion. In terms of biological role, GTPase that may function in mitochondrial ribosome assembly. In Arabidopsis thaliana (Mouse-ear cress), this protein is DAR GTPase 2, mitochondrial.